Reading from the N-terminus, the 1243-residue chain is Zinc finger protein ZFAT (1243 aa).

The C2H2-type 1 zinc-finger motif lies at 12–35 (FMCKCCNLFSPNQSELLSHVSEKH). Disordered stretches follow at residues 51 to 116 (PLST…PSSL) and 147 to 189 (GEAG…GKEA). Residues 70–81 (MKRKRGRPKGST) are compositionally biased toward basic residues. The C2H2-type 2; degenerate zinc-finger motif lies at 116–141 (LECSKCCRKFSNTRQLRKHICIIVLN). Over residues 156–189 (ELEKKCKEDDREKASKRPRSQKTEKVQKISGKEA) the composition is skewed to basic and acidic residues. 7 C2H2-type zinc fingers span residues 271–293 (FTCE…LRIH), 299–321 (YKCP…LRKH), 326–349 (FACD…ERVH), 354–377 (QHCR…RDAH), 404–426 (YDCH…MLVH), 432–454 (FACE…VRKH), and 458–481 (YVCA…KEVH). Zn(2+)-binding residues include Cys273, Cys276, His289, His293, Cys301, Cys304, His317, His321, Cys328, Cys331, His344, His349, Cys356, Cys359, His372, His377, Cys406, Cys409, His422, and His426. Cys460, Cys463, His476, and His481 together coordinate Zn(2+). 3 disordered regions span residues 534–570 (EACP…AEST), 603–625 (TSSA…SSVQ), and 638–705 (AQSA…CKAA). The span at 610–620 (AAPEKPPDMQH) shows a compositional bias: basic and acidic residues. Residues 638–650 (AQSAGSDQESHGA) are compositionally biased toward polar residues. C2H2-type zinc fingers lie at residues 742 to 764 (LECE…VRTH), 770 to 793 (YYCS…IQKH), 798 to 822 (LKCP…LKVH), 830 to 853 (YSCP…KTNH), 880 to 903 (MKCP…IWAH), 909 to 931 (FKCS…MNRH), 937 to 959 (HLCD…KLLH), 966 to 988 (FKCT…MEQH), 994 to 1017 (FRCA…NRKH), and 1041 to 1064 (LKCP…KNKH). Zn(2+)-binding residues include Cys772, Cys775, His788, His793, Cys800, Cys805, His818, His822, Cys832, Cys835, His848, His853, Cys882, Cys885, His899, His903, Cys911, Cys914, His927, His931, Cys939, Cys942, His955, and Leu958.

In terms of tissue distribution, isoform 1 is strongly expressed in placenta, spleen, kidney, testis and peripheral blood leukocytes. Expressed in CD4+ and CD8+ T-cells, CD19+ B-cells and CB14+ monocytes. Isoform 3 is strongly expressed in placenta, ovary, tonsil, CD19+ B-cells and CD14+ monocytes.

Its subcellular location is the nucleus. The protein resides in the cytoplasm. The protein localises to the cytosol. Its function is as follows. May be involved in transcriptional regulation. Overexpression causes down-regulation of a number of genes involved in the immune response. Some genes are also up-regulated. This Homo sapiens (Human) protein is Zinc finger protein ZFAT (ZFAT).